The sequence spans 25 residues: Unknown protein 7 (25 aa).

The disordered stretch occupies residues 1 to 25 (MENGKVHVASMSGLSMPHMNEMLEK).

The protein is Unknown protein 7 of Pseudotsuga menziesii (Douglas-fir).